Reading from the N-terminus, the 623-residue chain is Probable lysophospholipase 5 (623 aa).

An N-terminal signal peptide occupies residues 1 to 19 (MKLSSFGLFLALQLLPALG). The 541-residue stretch at 67-607 (ACPSGSLLRP…NQYCWNGTIA (541 aa)) folds into the PLA2c domain. Residues Asn-118, Asn-153, Asn-187, Asn-232, Asn-256, Asn-264, Asn-293, Asn-331, Asn-360, Asn-367, Asn-400, Asn-403, Asn-474, Asn-508, Asn-513, Asn-537, Asn-564, Asn-586, and Asn-603 are each glycosylated (N-linked (GlcNAc...) asparagine).

It belongs to the lysophospholipase family.

The protein localises to the secreted. It catalyses the reaction a 1-acyl-sn-glycero-3-phosphocholine + H2O = sn-glycerol 3-phosphocholine + a fatty acid + H(+). Catalyzes the release of fatty acids from lysophospholipids. In Schizosaccharomyces pombe (strain 972 / ATCC 24843) (Fission yeast), this protein is Probable lysophospholipase 5 (plb5).